The chain runs to 206 residues: Ribosomal RNA small subunit methyltransferase G (206 aa).

S-adenosyl-L-methionine is bound by residues G73, L78, 124 to 125, and R139; that span reads VE.

This sequence belongs to the methyltransferase superfamily. RNA methyltransferase RsmG family.

It localises to the cytoplasm. It catalyses the reaction guanosine(527) in 16S rRNA + S-adenosyl-L-methionine = N(7)-methylguanosine(527) in 16S rRNA + S-adenosyl-L-homocysteine. Functionally, specifically methylates the N7 position of guanine in position 527 of 16S rRNA. This is Ribosomal RNA small subunit methyltransferase G from Yersinia pseudotuberculosis serotype O:3 (strain YPIII).